The chain runs to 147 residues: uncharacterized protein (147 aa).

This is an uncharacterized protein from Acidianus convivator (ATV).